A 286-amino-acid polypeptide reads, in one-letter code: Putative quercetin 2,3-dioxygenase PA2418 (286 aa).

4 residues coordinate a divalent metal cation: histidine 61, histidine 63, histidine 105, and glutamate 107.

The protein belongs to the pirin family. The cofactor is a divalent metal cation.

It carries out the reaction quercetin + O2 = 2-(3,4-dihydroxybenzoyloxy)-4,6-dihydroxybenzoate + CO. The protein operates within flavonoid metabolism; quercetin degradation. Functionally, putative quercetin 2,3-dioxygenase. This is Putative quercetin 2,3-dioxygenase PA2418 from Pseudomonas aeruginosa (strain ATCC 15692 / DSM 22644 / CIP 104116 / JCM 14847 / LMG 12228 / 1C / PRS 101 / PAO1).